A 452-amino-acid chain; its full sequence is tRNA modification GTPase MnmE (452 aa).

(6S)-5-formyl-5,6,7,8-tetrahydrofolate-binding residues include arginine 24, glutamate 81, and arginine 120. In terms of domain architecture, TrmE-type G spans 216 to 373; sequence GIKTVIVGAP…LFGAIGRWAD (158 aa). Residues 226–231, 245–251, and 270–273 contribute to the GTP site; these read NVGKSS, SAEPGTT, and DTAG. Mg(2+) is bound by residues serine 230 and threonine 251. Residue lysine 452 coordinates (6S)-5-formyl-5,6,7,8-tetrahydrofolate.

Belongs to the TRAFAC class TrmE-Era-EngA-EngB-Septin-like GTPase superfamily. TrmE GTPase family. Homodimer. Heterotetramer of two MnmE and two MnmG subunits. The cofactor is K(+).

It localises to the cytoplasm. Its function is as follows. Exhibits a very high intrinsic GTPase hydrolysis rate. Involved in the addition of a carboxymethylaminomethyl (cmnm) group at the wobble position (U34) of certain tRNAs, forming tRNA-cmnm(5)s(2)U34. This is tRNA modification GTPase MnmE from Opitutus terrae (strain DSM 11246 / JCM 15787 / PB90-1).